Reading from the N-terminus, the 219-residue chain is Holliday junction branch migration complex subunit RuvA (219 aa).

The tract at residues methionine 1–lysine 66 is domain I. A domain II region spans residues threonine 67–serine 148. The interval serine 149–serine 154 is flexible linker. Residues asparagine 155 to serine 219 form a domain III region.

This sequence belongs to the RuvA family. In terms of assembly, homotetramer. Forms an RuvA(8)-RuvB(12)-Holliday junction (HJ) complex. HJ DNA is sandwiched between 2 RuvA tetramers; dsDNA enters through RuvA and exits via RuvB. An RuvB hexamer assembles on each DNA strand where it exits the tetramer. Each RuvB hexamer is contacted by two RuvA subunits (via domain III) on 2 adjacent RuvB subunits; this complex drives branch migration. In the full resolvosome a probable DNA-RuvA(4)-RuvB(12)-RuvC(2) complex forms which resolves the HJ.

It is found in the cytoplasm. Functionally, the RuvA-RuvB-RuvC complex processes Holliday junction (HJ) DNA during genetic recombination and DNA repair, while the RuvA-RuvB complex plays an important role in the rescue of blocked DNA replication forks via replication fork reversal (RFR). RuvA specifically binds to HJ cruciform DNA, conferring on it an open structure. The RuvB hexamer acts as an ATP-dependent pump, pulling dsDNA into and through the RuvAB complex. HJ branch migration allows RuvC to scan DNA until it finds its consensus sequence, where it cleaves and resolves the cruciform DNA. The sequence is that of Holliday junction branch migration complex subunit RuvA from Malacoplasma penetrans (strain HF-2) (Mycoplasma penetrans).